The following is a 69-amino-acid chain: FMRFamide-like neuropeptides 24 (69 aa).

A signal peptide spans 1 to 25; that stretch reads MLSSRTSSIILILAILVAIMAVAQC. Residues 26 to 51 constitute a propeptide that is removed on maturation; that stretch reads RNIQYDVEEMTPEAAFRYAQWGEIPH. Phe64 carries the phenylalanine amide modification. Residues 68–69 constitute a propeptide that is removed on maturation; the sequence is SI.

The protein belongs to the FARP (FMRFamide related peptide) family.

It localises to the secreted. In terms of biological role, probable FMRFamide-like neuropeptides. Plays a role in behaviors associated with a sleep-like state induced by stress (SIS), acting in concert with the FMRFamide related peptide flp-13 and neuropeptide-like protein nlp-8. The chain is FMRFamide-like neuropeptides 24 from Caenorhabditis elegans.